We begin with the raw amino-acid sequence, 445 residues long: Phosphoglucosamine mutase (445 aa).

Ser104 serves as the catalytic Phosphoserine intermediate. Mg(2+) is bound by residues Ser104, Asp243, Asp245, and Asp247. A Phosphoserine modification is found at Ser104.

It belongs to the phosphohexose mutase family. Mg(2+) is required as a cofactor. Post-translationally, activated by phosphorylation.

The enzyme catalyses alpha-D-glucosamine 1-phosphate = D-glucosamine 6-phosphate. Its function is as follows. Catalyzes the conversion of glucosamine-6-phosphate to glucosamine-1-phosphate. This Neisseria subflava protein is Phosphoglucosamine mutase.